A 107-amino-acid polypeptide reads, in one-letter code: Putative pterin-4-alpha-carbinolamine dehydratase (107 aa).

This sequence belongs to the pterin-4-alpha-carbinolamine dehydratase family.

The enzyme catalyses (4aS,6R)-4a-hydroxy-L-erythro-5,6,7,8-tetrahydrobiopterin = (6R)-L-erythro-6,7-dihydrobiopterin + H2O. This Rubrobacter xylanophilus (strain DSM 9941 / JCM 11954 / NBRC 16129 / PRD-1) protein is Putative pterin-4-alpha-carbinolamine dehydratase.